Consider the following 301-residue polypeptide: Phosducin-like protein (301 aa).

N-acetylthreonine is present on threonine 2. Positions 15 to 53 are disordered; that stretch reads YYYSSSEEEDSDHEDKDRGRGALAGSSMPADADLAGEGI. 5 positions are modified to phosphoserine: serine 20, serine 25, serine 226, serine 293, and serine 296. The 263-residue stretch at 37–299 folds into the Phosducin domain; sequence LAGSSMPADA…TCHSEDSDLE (263 aa). The thioredoxin fold stretch occupies residues 158–301; that stretch reads FKQVFEIPSG…HSEDSDLEID (144 aa).

Belongs to the phosducin family. As to quaternary structure, forms a complex with the beta and gamma subunits of the GTP-binding protein, transducin. Interacts with the CCT chaperonin complex.

The protein resides in the cell projection. It is found in the cilium. Functions as a co-chaperone for CCT in the assembly of heterotrimeric G protein complexes, facilitates the assembly of both Gbeta-Ggamma and RGS-Gbeta5 heterodimers. Also acts as a positive regulator of hedgehog signaling and regulates ciliary function. This Bos taurus (Bovine) protein is Phosducin-like protein (PDCL).